A 456-amino-acid polypeptide reads, in one-letter code: MSRLIINKSNSRICNTIVKNYLIQTKYTLQQQQHQQQQQQQQYVRSYCSLQQPKPSKPNMIEIVTHFFDKVKNKSFIIENYLNNPIPEQQQQLNKNIKINNTDKDNDTLEQIQLLDPLNNLGKRKGNEIFKVVENDLSNMTHNIMKTITDGVSANSTYSPSPSKKTHPILSSISSYYFELKGKRIRPTIVLLLSKALSSTVHGSQLKLAEIVEMIHTASLVHDDVIDEASTRRDVISINHSYTNKLAILCGDYLLARASVVLSTIRNPDVTECMSTALAELVEGEFMQAKSNGVVSFDNYLQKTYLKTGSLITNSCRSAAILSGADSNIINISTEFGKNLGLAFQIVDDLLDYTGSAEECGKATSVDLTLGLATAPVLYATQEFPQLEKLIKRKFSEIGDVEEAKRLVALSKGIEKTRNLAIEYCNRAIQSLLKLPQSESRDLLITLSHIVVTRTK.

Isopentenyl diphosphate contacts are provided by lysine 183, arginine 186, and histidine 216. Mg(2+) contacts are provided by aspartate 223 and aspartate 227. Isopentenyl diphosphate is bound at residue arginine 233.

It belongs to the FPP/GGPP synthase family. Requires Mg(2+) as cofactor.

The protein resides in the mitochondrion. It catalyses the reaction 7 isopentenyl diphosphate + (2E,6E)-farnesyl diphosphate = all-trans-decaprenyl diphosphate + 7 diphosphate. It participates in cofactor biosynthesis; ubiquinone biosynthesis. Its function is as follows. Supplies decaprenyl diphosphate, the precursor for the side chain of the isoprenoid quinones ubiquinone-10. The sequence is that of Decaprenyl-diphosphate synthase (coq1) from Dictyostelium discoideum (Social amoeba).